Consider the following 147-residue polypeptide: Nudix hydrolase 1 (147 aa).

N-acetylserine is present on Ser2. Residues 7–140 (IPRVAVVVFI…EKLFGSGFNP (134 aa)) form the Nudix hydrolase domain. The Nudix box signature appears at 41–62 (GHLEFGESFEECAAREVMEETG). Mg(2+)-binding residues include Glu56 and Glu60.

The protein belongs to the Nudix hydrolase family. In terms of assembly, homodimer. Requires Mg(2+) as cofactor. Mn(2+) is required as a cofactor. As to expression, expressed in roots, stems and leaves.

It localises to the cytoplasm. It carries out the reaction 7,8-dihydroneopterin 3'-triphosphate + H2O = 7,8-dihydroneopterin 3'-phosphate + diphosphate + H(+). The enzyme catalyses NAD(+) + H2O = beta-nicotinamide D-ribonucleotide + AMP + 2 H(+). It catalyses the reaction NADH + H2O = reduced beta-nicotinamide D-ribonucleotide + AMP + 2 H(+). The catalysed reaction is 8-oxo-dGTP + H2O = 8-oxo-dGMP + diphosphate + H(+). In terms of biological role, mediates the hydrolysis of some nucleoside diphosphate derivatives. Its substrate specificity is unclear. In vitro, it can use NTP, dNTP, 8-oxo-GTP, 8-oxo-dGTP, dGTP, dATP, dTTP or dihydroneopterin triphosphate (DHNTP) as substrate. Has some NADH pyrophosphatase activity in vitro; however, such activity may not be relevant in vivo due to the high concentration of manganese used during the experiments. Plays an important role in protection against oxidative DNA and RNA damage by removing oxidatively damaged form of guanine. This chain is Nudix hydrolase 1 (NUDT1), found in Arabidopsis thaliana (Mouse-ear cress).